The sequence spans 381 residues: Putative F-box/kelch-repeat protein At3g17570 (381 aa).

An F-box domain is found at 1 to 45; that stretch reads MFTDLPRDLETEILSRVPATSLQKLKPTCKRWYTLFKDPEFLKKH. 3 Kelch repeats span residues 151–199, 229–281, and 331–379; these read SYKI…TLKG, LLYQ…KIVE, and RFYI…GGKR.

The polypeptide is Putative F-box/kelch-repeat protein At3g17570 (Arabidopsis thaliana (Mouse-ear cress)).